We begin with the raw amino-acid sequence, 294 residues long: MSDYLVKALAYDGMARVYAAVTTETIKEAQRRHDTWSVSSAALGRTMTGTLFLGAMQKEDQKITVKIEGDGPIGPIVADSNAQGQIRGYVTNPHVHFSELNEAGKLDVRRGVGTSGMLSVVKDLGFGENFTGQTPIISGEIGEDFTYYLATSEQINSSVGVGVLVNPDDTIEAAGGFMLQLLPGATDEIIDEIEKNLTALPTVSRMIEAGETPESILAKLAGGEDKLQILEKIPVSFECNCSKERFGSAIISLGKEEIRSMIEEDHGAEAECHFCRNAYDFSEEELEKLYDEAK.

Intrachain disulfides connect cysteine 239/cysteine 241 and cysteine 272/cysteine 275.

This sequence belongs to the HSP33 family. Under oxidizing conditions two disulfide bonds are formed involving the reactive cysteines. Under reducing conditions zinc is bound to the reactive cysteines and the protein is inactive.

It is found in the cytoplasm. Functionally, redox regulated molecular chaperone. Protects both thermally unfolding and oxidatively damaged proteins from irreversible aggregation. Plays an important role in the bacterial defense system toward oxidative stress. The protein is 33 kDa chaperonin of Listeria monocytogenes serotype 4b (strain CLIP80459).